The primary structure comprises 224 residues: Ribonuclease HII (224 aa).

Residues 7 to 217 (STIMGIDEAG…SNAVIADCLQ (211 aa)) enclose the RNase H type-2 domain. Asp-13, Glu-14, and Asp-111 together coordinate a divalent metal cation.

Belongs to the RNase HII family. It depends on Mn(2+) as a cofactor. The cofactor is Mg(2+).

The protein resides in the cytoplasm. It catalyses the reaction Endonucleolytic cleavage to 5'-phosphomonoester.. Its function is as follows. Endonuclease that specifically degrades the RNA of RNA-DNA hybrids. This chain is Ribonuclease HII, found in Methanocella arvoryzae (strain DSM 22066 / NBRC 105507 / MRE50).